A 185-amino-acid chain; its full sequence is Elongation factor P (185 aa).

The protein belongs to the elongation factor P family.

It is found in the cytoplasm. The protein operates within protein biosynthesis; polypeptide chain elongation. Involved in peptide bond synthesis. Stimulates efficient translation and peptide-bond synthesis on native or reconstituted 70S ribosomes in vitro. Probably functions indirectly by altering the affinity of the ribosome for aminoacyl-tRNA, thus increasing their reactivity as acceptors for peptidyl transferase. This Moorella thermoacetica (strain ATCC 39073 / JCM 9320) protein is Elongation factor P.